The following is a 419-amino-acid chain: GTPase Obg (419 aa).

An Obg domain is found at 1–158; it reads MFVDQARIFV…KWIRLELKLL (158 aa). The 169-residue stretch at 159–327 folds into the OBG-type G domain; that stretch reads ADVGLVGFPN…LMGKTYALLQ (169 aa). Residues 165 to 172, 190 to 194, 212 to 215, 282 to 285, and 308 to 310 contribute to the GTP site; these read GFPNAGKS, FTTLV, DIPG, NKMD, and SAV. Residues Ser-172 and Thr-192 each coordinate Mg(2+). An OCT domain is found at 342-419; the sequence is RRFEEELPFK…IKDFEFEFTE (78 aa).

This sequence belongs to the TRAFAC class OBG-HflX-like GTPase superfamily. OBG GTPase family. Monomer. Mg(2+) serves as cofactor.

The protein resides in the cytoplasm. An essential GTPase which binds GTP, GDP and possibly (p)ppGpp with moderate affinity, with high nucleotide exchange rates and a fairly low GTP hydrolysis rate. Plays a role in control of the cell cycle, stress response, ribosome biogenesis and in those bacteria that undergo differentiation, in morphogenesis control. This Syntrophomonas wolfei subsp. wolfei (strain DSM 2245B / Goettingen) protein is GTPase Obg.